The primary structure comprises 342 residues: Succinylglutamate desuccinylase (342 aa).

3 residues coordinate Zn(2+): histidine 63, glutamate 66, and histidine 155. Residue glutamate 219 is part of the active site.

This sequence belongs to the AspA/AstE family. Succinylglutamate desuccinylase subfamily. The cofactor is Zn(2+).

It carries out the reaction N-succinyl-L-glutamate + H2O = L-glutamate + succinate. It functions in the pathway amino-acid degradation; L-arginine degradation via AST pathway; L-glutamate and succinate from L-arginine: step 5/5. Functionally, transforms N(2)-succinylglutamate into succinate and glutamate. The sequence is that of Succinylglutamate desuccinylase from Vibrio vulnificus (strain CMCP6).